A 438-amino-acid polypeptide reads, in one-letter code: GDP-mannose 6-dehydrogenase (438 aa).

Positions 10, 11, 30, 35, 86, and 124 each coordinate NAD(+). 10 residues coordinate GDP-alpha-D-mannuronate: E161, K210, N214, H217, N225, Y256, Y257, R259, F262, and G265. C268 is a catalytic residue. K271 contributes to the NAD(+) binding site. K324 contributes to the GDP-alpha-D-mannuronate binding site. NAD(+) is bound at residue R331.

Belongs to the UDP-glucose/GDP-mannose dehydrogenase family.

It carries out the reaction GDP-alpha-D-mannose + 2 NAD(+) + H2O = GDP-alpha-D-mannuronate + 2 NADH + 3 H(+). Its pathway is glycan biosynthesis; alginate biosynthesis. Its function is as follows. Catalyzes the oxidation of guanosine diphospho-D-mannose (GDP-D-mannose) to GDP-D-mannuronic acid, a precursor for alginate polymerization. The alginate layer causes a mucoid phenotype and provides a protective barrier against host immune defenses and antibiotics. In Pseudomonas syringae pv. tomato (strain ATCC BAA-871 / DC3000), this protein is GDP-mannose 6-dehydrogenase (algD).